A 95-amino-acid polypeptide reads, in one-letter code: Protein Vpr (95 aa).

Positions 1–42 are homooligomerization; that stretch reads MERAPEDAGPQREPYNEWALELLEELKNEAVRHFPRIWLHGL. Phosphoserine; by host is present on residues serine 79, serine 93, and serine 95.

The protein belongs to the HIV-1 VPR protein family. In terms of assembly, homooligomer, may form homodimer. Interacts with p6-gag region of the Pr55 Gag precursor protein through a (Leu-X-X)4 motif near the C-terminus of the P6gag protein. Interacts with host UNG. May interact with host RAD23A/HHR23A. Interacts with host VPRBP/DCAF1, leading to hijack the CUL4A-RBX1-DDB1-DCAF1/VPRBP complex, mediating ubiquitination of host proteins such as TERT and ZGPAT and arrest of the cell cycle in G2 phase. In terms of processing, phosphorylated on several residues by host. These phosphorylations regulate VPR activity for the nuclear import of the HIV-1 pre-integration complex.

It is found in the virion. The protein resides in the host nucleus. The protein localises to the host extracellular space. Functionally, during virus replication, may deplete host UNG protein, and incude G2-M cell cycle arrest. Acts by targeting specific host proteins for degradation by the 26S proteasome, through association with the cellular CUL4A-DDB1 E3 ligase complex by direct interaction with host VPRPB/DCAF-1. Cell cycle arrest reportedly occurs within hours of infection and is not blocked by antiviral agents, suggesting that it is initiated by the VPR carried into the virion. Additionally, VPR induces apoptosis in a cell cycle dependent manner suggesting that these two effects are mechanistically linked. Detected in the serum and cerebrospinal fluid of AIDS patient, VPR may also induce cell death to bystander cells. In terms of biological role, during virus entry, plays a role in the transport of the viral pre-integration (PIC) complex to the host nucleus. This function is crucial for viral infection of non-dividing macrophages. May act directly at the nuclear pore complex, by binding nucleoporins phenylalanine-glycine (FG)-repeat regions. This is Protein Vpr from Homo sapiens (Human).